The sequence spans 393 residues: Chorismate synthase (393 aa).

NADP(+) contacts are provided by arginine 39 and arginine 45. Residues 133 to 135 (RSS), 256 to 257 (NA), glycine 301, 316 to 320 (KPIPT), and arginine 342 each bind FMN.

The protein belongs to the chorismate synthase family. Homotetramer. The cofactor is FMNH2.

The catalysed reaction is 5-O-(1-carboxyvinyl)-3-phosphoshikimate = chorismate + phosphate. It participates in metabolic intermediate biosynthesis; chorismate biosynthesis; chorismate from D-erythrose 4-phosphate and phosphoenolpyruvate: step 7/7. Its function is as follows. Catalyzes the anti-1,4-elimination of the C-3 phosphate and the C-6 proR hydrogen from 5-enolpyruvylshikimate-3-phosphate (EPSP) to yield chorismate, which is the branch point compound that serves as the starting substrate for the three terminal pathways of aromatic amino acid biosynthesis. This reaction introduces a second double bond into the aromatic ring system. The polypeptide is Chorismate synthase (Lysinibacillus sphaericus (strain C3-41)).